We begin with the raw amino-acid sequence, 1359 residues long: MLKNLRNKIKEKLTYSLLSSQEFDNNKDYYQQPCPEDNANLWSRLTFGWAQRMLISGYFNGPLEMSDINDLPKDIKVQSSIQLLNNINLNKNNNSRWPLIKHFYKQFLYRNKLTIFLQILTNILSILSPLSLKYFIQFIQSTNKERSFLAGIGYCILLLIASFSYTFSQQLLMWFAMKSSLEIKGCLSIKVYEKTLKLTTCGGKNYNPGSIMNLLSVDVGIISNFFWIEHMGIFAFSSQMIGLLALLCWVIGWSGLVGFAIMVITFPINTYIGSKIGKNLKESMGYSDKRTNLTSEFINGIRFLKMYAWEKLFLDRIEEQRSLQLKYLYKRMIFWIFAEMMKQAVNAIVLVLTFIVYSINNEITLEVAFTTISIFVSLRIPLLRLPNSIQQLQSLIPIAKRVEDFLKSPEIQQNHSSNREEEEEDEYDDDINSDGDISIHNGSFNWNQVDSNGSGNGNGNQQQQQQQQQQQQQQQQQQQQQSYTLNNINFKAPAGKLTIICGVVGSGKTSLVSGLIGEIYKVSGRVNTPNKISFTTQQSFLLSTSLRENILFGNEMNLERYKKVIEACCLAPDLLQLAAKDLTEIGERGINLSGGQKQRISLARALYANSDCYILDEPLSAVDPEVATHLFNHCIQGMMNDKTRILITHQLQFIPSADHIVVVDNGKLVQGTYSELKSKGIDFESIMKTKKLNIDNQQQQQQHEKENDIVLSDEDSNNSIKNNNNISNLIDIDEVISDENDSNLIERSKLLVDEDRNEGSVNLRVYKEYFKHGSSIPLFIMTCIVYMISQIIYQMSDFWLSTWSQRSIPDKTDKYYISIYLLFIVGFIIFLVIRYFMMAHVTFSASKNLHQSLLKSVGFASCQFFDTNPSGRILNRFSKDISDVDLLLFDLFSDVLYCGSTVLVSIGIMIYISPLIIIPFLLLIGIYYFIQRLYTESSRELKRLEAISRSPIFSLLQESFNGLVTIRSYKQQNKFISMMQDRINTNHRLSYYGFSVHRWVAVRLEFISSIVVFLAAFFSLFNSNAGFSVLSVTTALGMCSYLNWTVRQMVELEVKMNSVERIESYLNIPKEGNSKINFFRNEQQEEEEEEEEEFDFDNDDYDGFKLSKKWLTKGEIEFRNVEIKYGHSGESSLKNFTLKINQKDHIGIVGRTGAGKSTIGNGLFRMVECSKGSILIDGVDISKIGLHELRSSLGIVPQDPFIFSGTIRLNIDPFNKYTDSEIWVALEKVKLKSTISSMPLKLETMIEEGGDGLSFGQKQLLCLSRTILKNSKVVLMDEATSGIDYVTSDLIKQTINNCFKNCTMLTIAHRLDTIIDSTKIAVIDKGKLIEYDTPNNLIENQESRFSKLVKHHHNLFKEK.

The ABC transmembrane type-1 1 domain maps to 111–394; sequence NKLTIFLQIL…LPNSIQQLQS (284 aa). 6 helical membrane-spanning segments follow: residues 119–139, 147–167, 214–234, 244–264, 332–352, and 363–383; these read ILTNILSILSPLSLKYFIQFI, SFLAGIGYCILLLIASFSYTF, LLSVDVGIISNFFWIEHMGIF, LALLCWVIGWSGLVGFAIMVI, MIFWIFAEMMKQAVNAIVLVL, and ITLEVAFTTISIFVSLRIPLL. Residues 409–478 are disordered; the sequence is PEIQQNHSSN…QQQQQQQQQQ (70 aa). Over residues 420–433 the composition is skewed to acidic residues; it reads EEEEEDEYDDDINS. The segment covering 440–450 has biased composition (polar residues); it reads HNGSFNWNQVD. The segment covering 459 to 478 has biased composition (low complexity); sequence GNQQQQQQQQQQQQQQQQQQ. The 221-residue stretch at 470-690 folds into the ABC transporter 1 domain; sequence QQQQQQQQQQ…IDFESIMKTK (221 aa). ATP is bound at residue 502 to 509; that stretch reads GVVGSGKT. An ABC transmembrane type-1 2 domain is found at 763 to 1061; it reads LRVYKEYFKH…LEVKMNSVER (299 aa). Helical transmembrane passes span 773-793, 819-839, 884-904, 906-926, and 999-1021; these read GSSIPLFIMTCIVYMISQIIY, IYLLFIVGFIIFLVIRYFMMA, VDLLLFDLFSDVLYCGSTVLV, IGIMIYISPLIIIPFLLLIGI, and WVAVRLEFISSIVVFLAAFFSLF. Residues 1073–1102 adopt a coiled-coil conformation; it reads NSKINFFRNEQQEEEEEEEEEFDFDNDDYD. The ABC transporter 2 domain occupies 1116–1350; sequence IEFRNVEIKY…QESRFSKLVK (235 aa). 1150-1157 contributes to the ATP binding site; that stretch reads GRTGAGKS.

This sequence belongs to the ABC transporter superfamily. ABCC family. Conjugate transporter (TC 3.A.1.208) subfamily.

Its subcellular location is the membrane. This is ABC transporter C family member 1 (abcC1) from Dictyostelium discoideum (Social amoeba).